A 344-amino-acid polypeptide reads, in one-letter code: Phenylalanine--tRNA ligase alpha subunit (344 aa).

E259 lines the Mg(2+) pocket.

It belongs to the class-II aminoacyl-tRNA synthetase family. Phe-tRNA synthetase alpha subunit type 1 subfamily. In terms of assembly, tetramer of two alpha and two beta subunits. Mg(2+) is required as a cofactor.

The protein localises to the cytoplasm. It catalyses the reaction tRNA(Phe) + L-phenylalanine + ATP = L-phenylalanyl-tRNA(Phe) + AMP + diphosphate + H(+). In Nitrosospira multiformis (strain ATCC 25196 / NCIMB 11849 / C 71), this protein is Phenylalanine--tRNA ligase alpha subunit.